A 111-amino-acid chain; its full sequence is UPF0339 protein in ptx operon 5'region (111 aa).

Tandem repeats lie at residues 10 to 58 (DKAG…RYER) and 61 to 109 (SGAD…VVEV).

This sequence belongs to the UPF0339 family. Duplicated subfamily.

The chain is UPF0339 protein in ptx operon 5'region from Stutzerimonas stutzeri (Pseudomonas stutzeri).